The chain runs to 205 residues: Holliday junction branch migration complex subunit RuvA (205 aa).

Residues 1-64 (MIGRLRGVLV…EDAQLLYGFI (64 aa)) form a domain I region. Residues 65 to 143 (TKQERALFRL…SLMEASAGSE (79 aa)) form a domain II region. The interval 144-156 (REFVLQSNYSPTP) is flexible linker. Residues 157 to 205 (TVNSAEEDAISALISLGYKPPQASKSVSAAYKEGMDSETLIKAALKSML) are domain III.

This sequence belongs to the RuvA family. As to quaternary structure, homotetramer. Forms an RuvA(8)-RuvB(12)-Holliday junction (HJ) complex. HJ DNA is sandwiched between 2 RuvA tetramers; dsDNA enters through RuvA and exits via RuvB. An RuvB hexamer assembles on each DNA strand where it exits the tetramer. Each RuvB hexamer is contacted by two RuvA subunits (via domain III) on 2 adjacent RuvB subunits; this complex drives branch migration. In the full resolvosome a probable DNA-RuvA(4)-RuvB(12)-RuvC(2) complex forms which resolves the HJ.

The protein resides in the cytoplasm. Its function is as follows. The RuvA-RuvB-RuvC complex processes Holliday junction (HJ) DNA during genetic recombination and DNA repair, while the RuvA-RuvB complex plays an important role in the rescue of blocked DNA replication forks via replication fork reversal (RFR). RuvA specifically binds to HJ cruciform DNA, conferring on it an open structure. The RuvB hexamer acts as an ATP-dependent pump, pulling dsDNA into and through the RuvAB complex. HJ branch migration allows RuvC to scan DNA until it finds its consensus sequence, where it cleaves and resolves the cruciform DNA. The chain is Holliday junction branch migration complex subunit RuvA from Shewanella sp. (strain W3-18-1).